Here is a 100-residue protein sequence, read N- to C-terminus: UPF0213 protein YhbQ (100 aa).

The GIY-YIG domain maps to Thr-2–Arg-77.

Belongs to the UPF0213 family.

This chain is UPF0213 protein YhbQ, found in Salmonella arizonae (strain ATCC BAA-731 / CDC346-86 / RSK2980).